Reading from the N-terminus, the 128-residue chain is Large-conductance mechanosensitive channel (128 aa).

Helical transmembrane passes span 11–31 and 70–90; these read FALK…AAFG and GAFI…FIFV.

It belongs to the MscL family. Homopentamer.

The protein resides in the cell membrane. Functionally, channel that opens in response to stretch forces in the membrane lipid bilayer. May participate in the regulation of osmotic pressure changes within the cell. This chain is Large-conductance mechanosensitive channel, found in Listeria innocua serovar 6a (strain ATCC BAA-680 / CLIP 11262).